The following is a 457-amino-acid chain: MDHLPIFCQLRQRDCLLVGGGDVAERKARLLLDAGANVTVNALDFTPQFQVWADSQMLTLVQGEFIPSLLDNCWLAIAATDDETVNQQVSEAAEARRIFCNVVDAPRQASFIMPSIIDRSPLMVAVSSGGTSPVLARLLREKLESILPLHLGQLARYAGHLRARVKQQFATVGERRRFWEKLFVNDRLAQSLANDDRQAVADTTEQLLTEPLEHRGEVVLVGAGPGDAGLLTLKGLQQIQQADVVVYDRLVSDDIMNLVRRDADRVFVGKRSGYHCVPQEEINQILLREAQKGRRVVRLKGGDPFIFGRGGEELETLCEAGIPFSVVPGITAASGCSAYSGIPLTHRDFAQGVRLVTGHLKTGGELDWANLAVEKQTLVFYMGLNQAPAIREKLIAHGMAEDMPAAIVENGTAVTQKVVSGTLGQLDILAQQMASPALIIVGRVVGLRDKLNWFSNH.

The tract at residues 1 to 204 (MDHLPIFCQL…DDRQAVADTT (204 aa)) is precorrin-2 dehydrogenase /sirohydrochlorin ferrochelatase. NAD(+)-binding positions include 22-23 (DV) and 43-44 (LD). Ser-128 is modified (phosphoserine). A uroporphyrinogen-III C-methyltransferase region spans residues 216–457 (GEVVLVGAGP…RDKLNWFSNH (242 aa)). Pro-225 lines the S-adenosyl-L-methionine pocket. The active-site Proton acceptor is the Asp-248. The active-site Proton donor is Lys-270. Residues 301–303 (GGD), Ile-306, 331–332 (TA), Met-382, and Gly-411 each bind S-adenosyl-L-methionine.

It in the N-terminal section; belongs to the precorrin-2 dehydrogenase / sirohydrochlorin ferrochelatase family. This sequence in the C-terminal section; belongs to the precorrin methyltransferase family.

It catalyses the reaction uroporphyrinogen III + 2 S-adenosyl-L-methionine = precorrin-2 + 2 S-adenosyl-L-homocysteine + H(+). The enzyme catalyses precorrin-2 + NAD(+) = sirohydrochlorin + NADH + 2 H(+). It carries out the reaction siroheme + 2 H(+) = sirohydrochlorin + Fe(2+). It participates in cofactor biosynthesis; adenosylcobalamin biosynthesis; precorrin-2 from uroporphyrinogen III: step 1/1. The protein operates within cofactor biosynthesis; adenosylcobalamin biosynthesis; sirohydrochlorin from precorrin-2: step 1/1. Its pathway is porphyrin-containing compound metabolism; siroheme biosynthesis; precorrin-2 from uroporphyrinogen III: step 1/1. It functions in the pathway porphyrin-containing compound metabolism; siroheme biosynthesis; siroheme from sirohydrochlorin: step 1/1. It participates in porphyrin-containing compound metabolism; siroheme biosynthesis; sirohydrochlorin from precorrin-2: step 1/1. Functionally, multifunctional enzyme that catalyzes the SAM-dependent methylations of uroporphyrinogen III at position C-2 and C-7 to form precorrin-2 via precorrin-1. Then it catalyzes the NAD-dependent ring dehydrogenation of precorrin-2 to yield sirohydrochlorin. Finally, it catalyzes the ferrochelation of sirohydrochlorin to yield siroheme. The protein is Siroheme synthase 2 of Klebsiella pneumoniae subsp. pneumoniae (strain ATCC 700721 / MGH 78578).